Reading from the N-terminus, the 348-residue chain is Alcohol dehydrogenase 1 (348 aa).

7 residues coordinate Zn(2+): cysteine 44, histidine 67, cysteine 98, cysteine 101, cysteine 104, cysteine 112, and cysteine 154. NAD(+) contacts are provided by residues 178-184, aspartate 202, lysine 207, 269-271, and arginine 341; these read GACGGLG and VGL.

Belongs to the zinc-containing alcohol dehydrogenase family. In terms of assembly, homotetramer. Zn(2+) is required as a cofactor.

The protein resides in the cytoplasm. The enzyme catalyses a primary alcohol + NAD(+) = an aldehyde + NADH + H(+). It carries out the reaction a secondary alcohol + NAD(+) = a ketone + NADH + H(+). This is Alcohol dehydrogenase 1 (ADH1) from Kluyveromyces marxianus (Yeast).